The following is a 372-amino-acid chain: Cell division protein FtsZ 1 (372 aa).

Residues glycine 51–asparagine 55, glycine 138–glycine 140, glutamate 169, arginine 173, and aspartate 216 contribute to the GTP site. A disordered region spans residues glutamate 352–leucine 372.

The protein belongs to the FtsZ family. Homodimer. Polymerizes to form a dynamic ring structure in a strictly GTP-dependent manner. Interacts directly with several other division proteins.

The protein localises to the cytoplasm. In terms of biological role, essential cell division protein that forms a contractile ring structure (Z ring) at the future cell division site. The regulation of the ring assembly controls the timing and the location of cell division. One of the functions of the FtsZ ring is to recruit other cell division proteins to the septum to produce a new cell wall between the dividing cells. Binds GTP and shows GTPase activity. The sequence is that of Cell division protein FtsZ 1 from Pyrococcus horikoshii (strain ATCC 700860 / DSM 12428 / JCM 9974 / NBRC 100139 / OT-3).